Here is a 389-residue protein sequence, read N- to C-terminus: Chaperone protein DnaJ (389 aa).

Residues 6–70 (DYYEILGLSK…EKRAQYDRFG (65 aa)) enclose the J domain. A CR-type zinc finger spans residues 131–213 (GVRKDIDIPR…CSGAGRVRSR (83 aa)). Residues cysteine 144, cysteine 147, cysteine 161, cysteine 164, cysteine 187, cysteine 190, cysteine 201, and cysteine 204 each contribute to the Zn(2+) site. CXXCXGXG motif repeat units lie at residues 144–151 (CSTCSGTG), 161–168 (CPNCGGTG), 187–194 (CSACHGRG), and 201–208 (CPTCSGAG). The disordered stretch occupies residues 145 to 167 (STCSGTGAKPGTSPKRCPNCGGT). The tract at residues 351 to 389 (LSNGKKPEAEERSRSDKQKSEKPRKSKGLFEKVKDAFES) is disordered. Basic and acidic residues predominate over residues 355–389 (KKPEAEERSRSDKQKSEKPRKSKGLFEKVKDAFES).

It belongs to the DnaJ family. As to quaternary structure, homodimer. Zn(2+) serves as cofactor.

It is found in the cytoplasm. Its function is as follows. Participates actively in the response to hyperosmotic and heat shock by preventing the aggregation of stress-denatured proteins and by disaggregating proteins, also in an autonomous, DnaK-independent fashion. Unfolded proteins bind initially to DnaJ; upon interaction with the DnaJ-bound protein, DnaK hydrolyzes its bound ATP, resulting in the formation of a stable complex. GrpE releases ADP from DnaK; ATP binding to DnaK triggers the release of the substrate protein, thus completing the reaction cycle. Several rounds of ATP-dependent interactions between DnaJ, DnaK and GrpE are required for fully efficient folding. Also involved, together with DnaK and GrpE, in the DNA replication of plasmids through activation of initiation proteins. The sequence is that of Chaperone protein DnaJ from Methanosarcina mazei (strain ATCC BAA-159 / DSM 3647 / Goe1 / Go1 / JCM 11833 / OCM 88) (Methanosarcina frisia).